The primary structure comprises 303 residues: Bidirectional sugar transporter SWEET14 (303 aa).

At 1–9 (MAGMSLQHP) the chain is on the extracellular side. The helical transmembrane segment at 10 to 30 (WAFAFGLLGNIISFMTYLAPL) threads the bilayer. Residues 13–98 (AFGLLGNIIS…AVYLVYAPKK (86 aa)) enclose the MtN3/slv 1 domain. Residues 31–44 (PTFYRIYKSKSTQG) are Cytoplasmic-facing. Residues 45-65 (FQSVPYVVALFSAMLWIYYAL) traverse the membrane as a helical segment. At 66–72 (LKSDECL) the chain is on the extracellular side. The helical transmembrane segment at 73–93 (LITINSAGCVIETIYIAVYLV) threads the bilayer. The Cytoplasmic segment spans residues 94–105 (YAPKKAKMFTAK). Residues 106-126 (LLLLVNVGVFGLILLLTLLLS) traverse the membrane as a helical segment. Over 127–133 (AGDRRIV) the chain is Extracellular. The chain crosses the membrane as a helical span at residues 134–154 (VLGWVCVGFSVSVFVAPLSII). The MtN3/slv 2 domain occupies 134–217 (VLGWVCVGFS…MGLYAMYRNS (84 aa)). The Cytoplasmic portion of the chain corresponds to 155-167 (RLVVRTKSVEFMP). Residues 168–188 (FSLSFSLTISAVVWFLYGLLI) traverse the membrane as a helical segment. Over 189–192 (KDKY) the chain is Extracellular. The chain crosses the membrane as a helical span at residues 193–213 (VALPNVLGFSFGVIQMGLYAM). The Cytoplasmic segment spans residues 214–303 (YRNSTPKAVL…AGAGEKKVAA (90 aa)). A disordered region spans residues 266–290 (HPVDVESPPAEAPPEEDDKAAAATA).

This sequence belongs to the SWEET sugar transporter family. In terms of assembly, forms homooligomers and/or heterooligomers.

The protein localises to the cell membrane. Mediates both low-affinity uptake and efflux of sugar across the plasma membrane. In terms of biological role, confers blight susceptibility. Confers TAL effector-mediated susceptibility to Xanthomonas oryzae pv. oryzae. The sequence is that of Bidirectional sugar transporter SWEET14 (SWEET14) from Oryza sativa subsp. japonica (Rice).